We begin with the raw amino-acid sequence, 492 residues long: Pre-mRNA-splicing factor sap61 (492 aa).

The C2H2-type zinc finger occupies 243–267 (FYCEVCQKFFGKITVFEAHKKSKAH). Disordered stretches follow at residues 268 to 291 (NKAVKRMQSSSPSTTSNTNEKQKG) and 337 to 365 (AAEREAFEQSTPSVSVEGNQDEESDQDDE). Low complexity predominate over residues 276 to 286 (SSSPSTTSNTN). Residues 345–354 (QSTPSVSVEG) show a composition bias toward polar residues. Residues 355-365 (NQDEESDQDDE) show a composition bias toward acidic residues. At Ser-360 the chain carries Phosphoserine. A Matrin-type zinc finger spans residues 397-428 (FPCEICGNYVYMGRKAFDKHFTEQRHIYGLKC).

The protein belongs to the SF3A3 family. In terms of assembly, belongs to the 40S cdc5-associated complex (or cwf complex), a spliceosome sub-complex reminiscent of a late-stage spliceosome composed of the U2, U5 and U6 snRNAs and at least brr2, cdc5, cwf2/prp3, cwf3/syf1, cwf4/syf3, cwf5/ecm2, spp42/cwf6, cwf7/spf27, cwf8, cwf9, cwf10, cwf11, cwf12, prp45/cwf13, cwf14, cwf15, cwf16, cwf17, cwf18, cwf19, cwf20, cwf21, cwf22, cwf23, cwf24, cwf25, cwf26, cyp7/cwf27, cwf28, cwf29/ist3, lea1, msl1, prp5/cwf1, prp10, prp12/sap130, prp17, prp22, sap61, sap62, sap114, sap145, slu7, smb1, smd1, smd3, smf1, smg1 and syf2.

It localises to the nucleus. The protein localises to the cytoplasm. Its function is as follows. Involved in mRNA splicing where it associates with cdc5 and the other cwf proteins as part of the spliceosome. The polypeptide is Pre-mRNA-splicing factor sap61 (sap61) (Schizosaccharomyces pombe (strain 972 / ATCC 24843) (Fission yeast)).